The sequence spans 243 residues: MALEPIILIPARIGSTRLPQKALAEIAGKPMIVHVAEQAKKAAFGRIIVATDHNNIAKVVTAYGHECIITCRDHKSGSDRIYEALTHIDPERRYNVILNVQGDLPTITPHEIISALRPLENSLTDIATLGAKIVEENEKTDPNIVKIIGTPLSHNRFRALYFTRATAPYGDGPLYHHIGIYAYRREALEKFVALKPSPLEQREKLEQLRALEHNMRIDVEIVDTIPLGVDTQRDLERVRKILA.

This sequence belongs to the KdsB family.

Its subcellular location is the cytoplasm. The enzyme catalyses 3-deoxy-alpha-D-manno-oct-2-ulosonate + CTP = CMP-3-deoxy-beta-D-manno-octulosonate + diphosphate. The protein operates within nucleotide-sugar biosynthesis; CMP-3-deoxy-D-manno-octulosonate biosynthesis; CMP-3-deoxy-D-manno-octulosonate from 3-deoxy-D-manno-octulosonate and CTP: step 1/1. Its pathway is bacterial outer membrane biogenesis; lipopolysaccharide biosynthesis. Functionally, activates KDO (a required 8-carbon sugar) for incorporation into bacterial lipopolysaccharide in Gram-negative bacteria. This is 3-deoxy-manno-octulosonate cytidylyltransferase from Bartonella henselae (strain ATCC 49882 / DSM 28221 / CCUG 30454 / Houston 1) (Rochalimaea henselae).